Reading from the N-terminus, the 208-residue chain is ATP-dependent Clp protease proteolytic subunit (208 aa).

Catalysis depends on Ser-107, which acts as the Nucleophile. Residue His-132 is part of the active site.

It belongs to the peptidase S14 family. In terms of assembly, fourteen ClpP subunits assemble into 2 heptameric rings which stack back to back to give a disk-like structure with a central cavity, resembling the structure of eukaryotic proteasomes.

The protein resides in the cytoplasm. It catalyses the reaction Hydrolysis of proteins to small peptides in the presence of ATP and magnesium. alpha-casein is the usual test substrate. In the absence of ATP, only oligopeptides shorter than five residues are hydrolyzed (such as succinyl-Leu-Tyr-|-NHMec, and Leu-Tyr-Leu-|-Tyr-Trp, in which cleavage of the -Tyr-|-Leu- and -Tyr-|-Trp bonds also occurs).. Its function is as follows. Cleaves peptides in various proteins in a process that requires ATP hydrolysis. Has a chymotrypsin-like activity. Plays a major role in the degradation of misfolded proteins. The protein is ATP-dependent Clp protease proteolytic subunit of Methylobacterium radiotolerans (strain ATCC 27329 / DSM 1819 / JCM 2831 / NBRC 15690 / NCIMB 10815 / 0-1).